A 177-amino-acid chain; its full sequence is Isopentenyl-diphosphate Delta-isomerase 1 (177 aa).

Mn(2+)-binding residues include His24 and His30. Residues 28 to 160 (SLHRAISIFI…PHAYSFWLEA (133 aa)) enclose the Nudix hydrolase domain. The active site involves Cys65. Cys65 lines the Mg(2+) pocket. Position 67 (His67) interacts with Mn(2+). Glu85 is a Mg(2+) binding site. Mn(2+)-binding residues include Glu110 and Glu112. The active site involves Glu112.

The protein belongs to the IPP isomerase type 1 family. Mg(2+) serves as cofactor. The cofactor is Mn(2+).

The protein localises to the cytoplasm. It catalyses the reaction isopentenyl diphosphate = dimethylallyl diphosphate. The protein operates within isoprenoid biosynthesis; dimethylallyl diphosphate biosynthesis; dimethylallyl diphosphate from isopentenyl diphosphate: step 1/1. Functionally, catalyzes the 1,3-allylic rearrangement of the homoallylic substrate isopentenyl (IPP) to its highly electrophilic allylic isomer, dimethylallyl diphosphate (DMAPP). The chain is Isopentenyl-diphosphate Delta-isomerase 1 from Aromatoleum aromaticum (strain DSM 19018 / LMG 30748 / EbN1) (Azoarcus sp. (strain EbN1)).